Consider the following 229-residue polypeptide: MTTVRIPAGWPATEEEARAVQDELRGRVILDEPGPPPGTGRVTGVDVAYDDERDVVVAAAVVLDAATLDVVAEATAVGEVSFPYVPGLLAFREIPTVLAALDALPCPPGLIVCDGYGVAHPRRFGLASHLGVLTGLPTIGVAKNPFTFSYEDPGAPRGSAAPLLAGADEVGRALRTQSGVKPVFVSVGHRVDLDHACAHTLALTPKYRIPETTRRADSLCRRALKEATA.

Mg(2+) is bound by residues aspartate 46 and aspartate 114.

Belongs to the endonuclease V family. Mg(2+) serves as cofactor.

It is found in the cytoplasm. The catalysed reaction is Endonucleolytic cleavage at apurinic or apyrimidinic sites to products with a 5'-phosphate.. In terms of biological role, DNA repair enzyme involved in the repair of deaminated bases. Selectively cleaves double-stranded DNA at the second phosphodiester bond 3' to a deoxyinosine leaving behind the intact lesion on the nicked DNA. The sequence is that of Endonuclease V from Streptomyces avermitilis (strain ATCC 31267 / DSM 46492 / JCM 5070 / NBRC 14893 / NCIMB 12804 / NRRL 8165 / MA-4680).